Consider the following 417-residue polypeptide: UDP-N-acetylglucosamine 1-carboxyvinyltransferase (417 aa).

A phosphoenolpyruvate-binding site is contributed by 22–23 (KN). A UDP-N-acetyl-alpha-D-glucosamine-binding site is contributed by Arg-92. The Proton donor role is filled by Cys-116. A 2-(S-cysteinyl)pyruvic acid O-phosphothioketal modification is found at Cys-116. Residues Asp-304 and Val-326 each coordinate UDP-N-acetyl-alpha-D-glucosamine.

The protein belongs to the EPSP synthase family. MurA subfamily.

The protein localises to the cytoplasm. It catalyses the reaction phosphoenolpyruvate + UDP-N-acetyl-alpha-D-glucosamine = UDP-N-acetyl-3-O-(1-carboxyvinyl)-alpha-D-glucosamine + phosphate. The protein operates within cell wall biogenesis; peptidoglycan biosynthesis. Cell wall formation. Adds enolpyruvyl to UDP-N-acetylglucosamine. The chain is UDP-N-acetylglucosamine 1-carboxyvinyltransferase from Syntrophotalea carbinolica (strain DSM 2380 / NBRC 103641 / GraBd1) (Pelobacter carbinolicus).